We begin with the raw amino-acid sequence, 260 residues long: Thiamine thiazole synthase (260 aa).

Residues Ala-36, 55 to 56, Gly-63, and 154 to 156 each bind NAD(+); these read EQ and HVD. Fe cation is bound by residues Asp-156 and His-171. Residue Met-224 participates in NAD(+) binding. Arg-234 is a glycine binding site.

The protein belongs to the THI4 family. Homooctamer; tetramer of dimers. Fe(2+) serves as cofactor.

The enzyme catalyses hydrogen sulfide + glycine + NAD(+) = ADP-5-ethyl-4-methylthiazole-2-carboxylate + nicotinamide + 3 H2O + H(+). It functions in the pathway cofactor biosynthesis; thiamine diphosphate biosynthesis. In terms of biological role, involved in the biosynthesis of the thiazole moiety of thiamine. Catalyzes the conversion of NAD and glycine to adenosine diphosphate 5-(2-hydroxyethyl)-4-methylthiazole-2-carboxylate (ADT), an adenylated thiazole intermediate, using free sulfide as a source of sulfur. The protein is Thiamine thiazole synthase of Methanosarcina acetivorans (strain ATCC 35395 / DSM 2834 / JCM 12185 / C2A).